The following is a 192-amino-acid chain: MKNKVVVVTGVPGVGGTTLTQKTIEKLKEEGIEYKMVNFGTVMFEVAKEEGLVEDRDQMRKLDPDTQKRIQKLAGRKIAEMAKESNVIVDTHSTVKTPKGYLAGLPIWVLEELNPDIIVIVETSSDEILMRRLGDATRNRDIELTSDIDEHQFMNRCAAMAYGVLTGATVKIIKNRDGLLDKAVEELISVLK.

10–18 (GVPGVGGTT) serves as a coordination point for ATP.

The protein belongs to the archaeal adenylate kinase family. In terms of assembly, monomer.

Its subcellular location is the cytoplasm. It carries out the reaction AMP + ATP = 2 ADP. The polypeptide is Adenylate kinase (adkA) (Methanotorris igneus (Methanococcus igneus)).